Here is a 611-residue protein sequence, read N- to C-terminus: DNA mismatch repair protein MutL (611 aa).

The segment at asparagine 353 to valine 387 is disordered. Over residues alanine 363–serine 380 the composition is skewed to low complexity.

It belongs to the DNA mismatch repair MutL/HexB family.

This protein is involved in the repair of mismatches in DNA. It is required for dam-dependent methyl-directed DNA mismatch repair. May act as a 'molecular matchmaker', a protein that promotes the formation of a stable complex between two or more DNA-binding proteins in an ATP-dependent manner without itself being part of a final effector complex. The chain is DNA mismatch repair protein MutL from Erwinia tasmaniensis (strain DSM 17950 / CFBP 7177 / CIP 109463 / NCPPB 4357 / Et1/99).